A 431-amino-acid chain; its full sequence is tRNA (adenine(37)-N6)-methyltransferase (431 aa).

Positions 30-168 constitute a TsaA-like domain; sequence TEPIGYLESC…YIADYDSPQN (139 aa). Residues 47 to 49, 90 to 91, Arg117, Leu127, and 148 to 151 each bind S-adenosyl-L-methionine; these read PRQ, HK, and IHGT. Disordered stretches follow at residues 167 to 189 and 201 to 243; these read QNLE…ATAN and KAQP…DRER. The span at 207–243 shows a compositional bias: basic and acidic residues; it reads STKEKPKCREHRTSDENSQKFRDTSEIQHTLPEDRER.

This sequence belongs to the tRNA methyltransferase O family.

It carries out the reaction N(6)-L-threonylcarbamoyladenosine(37) in tRNA + S-adenosyl-L-methionine = N(6)-methyl,N(6)-L-threonylcarbamoyladenosine(37) in tRNA + S-adenosyl-L-homocysteine + H(+). In terms of biological role, S-adenosyl-L-methionine-dependent methyltransferase responsible for the addition of the methyl group in the formation of N6-methyl-N6-threonylcarbamoyladenosine at position 37 (m(6)t(6)A37) of the tRNA anticodon loop of tRNA(Ser)(GCU). The methyl group of m(6)t(6)A37 may improve the efficiency of the tRNA decoding ability. May bind to tRNA. In Rattus norvegicus (Rat), this protein is tRNA (adenine(37)-N6)-methyltransferase.